A 278-amino-acid polypeptide reads, in one-letter code: Diaminopimelate epimerase (278 aa).

Substrate is bound by residues asparagine 11 and asparagine 75. The active-site Proton donor is the cysteine 84. Residues 85 to 86, asparagine 160, asparagine 195, and 213 to 214 contribute to the substrate site; these read GN and ER. Cysteine 222 (proton acceptor) is an active-site residue. 223 to 224 is a binding site for substrate; the sequence is GT.

Belongs to the diaminopimelate epimerase family. Homodimer.

It localises to the cytoplasm. It catalyses the reaction (2S,6S)-2,6-diaminopimelate = meso-2,6-diaminopimelate. It participates in amino-acid biosynthesis; L-lysine biosynthesis via DAP pathway; DL-2,6-diaminopimelate from LL-2,6-diaminopimelate: step 1/1. Catalyzes the stereoinversion of LL-2,6-diaminopimelate (L,L-DAP) to meso-diaminopimelate (meso-DAP), a precursor of L-lysine and an essential component of the bacterial peptidoglycan. This chain is Diaminopimelate epimerase, found in Corynebacterium aurimucosum (strain ATCC 700975 / DSM 44827 / CIP 107346 / CN-1) (Corynebacterium nigricans).